The chain runs to 553 residues: T-complex protein 1 subunit eta (553 aa).

ADP is bound at residue glycine 41. Glycine 41 contacts ATP. A Mg(2+)-binding site is contributed by aspartate 92. ADP is bound by residues glycine 93, threonine 94, threonine 95, serine 96, serine 164, and serine 165. Glycine 93 lines the ATP pocket. Serine 96 serves as a coordination point for ATP. 2 residues coordinate ATP: arginine 398 and glycine 409. 3 residues coordinate ADP: glycine 409, glutamate 494, and arginine 499. Arginine 499 lines the ATP pocket. The disordered stretch occupies residues 523-553 (PRSTVDAPPGGRGRGRGQTPQPLRPRSVALS). Over residues 539–553 (GQTPQPLRPRSVALS) the composition is skewed to low complexity.

As to quaternary structure, component of the chaperonin-containing T-complex (TRiC), a hexadecamer composed of two identical back-to-back stacked rings enclosing a protein folding chamber. Each ring is made up of eight different subunits: TCP1/CCT1, CCT2, CCT3, CCT4, CCT5, CCT6A/CCT6, CCT7, CCT8.

Its subcellular location is the cytoplasm. It catalyses the reaction ATP + H2O = ADP + phosphate + H(+). Component of the chaperonin-containing T-complex (TRiC), a molecular chaperone complex that assists the folding of actin, tubulin and other proteins upon ATP hydrolysis. The polypeptide is T-complex protein 1 subunit eta (Gallus gallus (Chicken)).